A 238-amino-acid chain; its full sequence is Large ribosomal subunit protein uL1 (238 aa).

This sequence belongs to the universal ribosomal protein uL1 family. As to quaternary structure, part of the 50S ribosomal subunit.

In terms of biological role, binds directly to 23S rRNA. The L1 stalk is quite mobile in the ribosome, and is involved in E site tRNA release. Protein L1 is also a translational repressor protein, it controls the translation of the L11 operon by binding to its mRNA. The polypeptide is Large ribosomal subunit protein uL1 (Rippkaea orientalis (strain PCC 8801 / RF-1) (Cyanothece sp. (strain PCC 8801))).